We begin with the raw amino-acid sequence, 123 residues long: Small ribosomal subunit protein uS12cz/uS12cy (123 aa).

This sequence belongs to the universal ribosomal protein uS12 family. As to quaternary structure, part of the 30S ribosomal subunit.

It is found in the plastid. It localises to the chloroplast. With S4 and S5 plays an important role in translational accuracy. Located at the interface of the 30S and 50S subunits. This Atropa belladonna (Belladonna) protein is Small ribosomal subunit protein uS12cz/uS12cy (rps12-A).